A 91-amino-acid polypeptide reads, in one-letter code: Small ribosomal subunit protein uS19 (91 aa).

Positions 1-32 (MPRSIKKGPFIDEHLDRKVQSAQASNSRRPIK) are disordered. The span at 9–19 (PFIDEHLDRKV) shows a compositional bias: basic and acidic residues.

It belongs to the universal ribosomal protein uS19 family.

Its function is as follows. Protein S19 forms a complex with S13 that binds strongly to the 16S ribosomal RNA. The sequence is that of Small ribosomal subunit protein uS19 from Acidithiobacillus ferrooxidans (strain ATCC 53993 / BNL-5-31) (Leptospirillum ferrooxidans (ATCC 53993)).